A 154-amino-acid polypeptide reads, in one-letter code: Isotocin-neurophysin IT 1 (154 aa).

Positions 1–20 are cleaved as a signal peptide; sequence MSGSMFSVFSLLYLLSVCSA. Cysteines 21 and 26 form a disulfide. A Glycine amide modification is found at glycine 29. 7 disulfide bridges follow: cysteine 42–cysteine 86, cysteine 45–cysteine 59, cysteine 53–cysteine 76, cysteine 60–cysteine 66, cysteine 93–cysteine 105, cysteine 99–cysteine 117, and cysteine 106–cysteine 111.

Belongs to the vasopressin/oxytocin family.

Its function is as follows. Isotocin causes contraction of smooth muscles. This chain is Isotocin-neurophysin IT 1, found in Catostomus commersonii (White sucker).